Here is a 218-residue protein sequence, read N- to C-terminus: Ribonuclease T (218 aa).

The region spanning 22 to 196 (VVVDVETAGF…YDAMKTAELF (175 aa)) is the Exonuclease domain. Residues Asp25, Glu27, His183, and Asp188 each contribute to the Mg(2+) site. The active-site Proton donor/acceptor is His183.

Belongs to the RNase T family. In terms of assembly, homodimer. Mg(2+) is required as a cofactor.

Its function is as follows. Trims short 3' overhangs of a variety of RNA species, leaving a one or two nucleotide 3' overhang. Responsible for the end-turnover of tRNA: specifically removes the terminal AMP residue from uncharged tRNA (tRNA-C-C-A). Also appears to be involved in tRNA biosynthesis. This Hahella chejuensis (strain KCTC 2396) protein is Ribonuclease T.